A 174-amino-acid polypeptide reads, in one-letter code: MATGPRYKVPFRRRREGRTNYHLRLKLLLSRQDRVVVRKSSRNVQIQLIAPTPDGDITYSSAVSNELAKYGYTGATGNTTAAYLTGLLFGLKSLQKGYEGGILDIGLQASSAGSRVYAALKGVVDSGFEIPCSPEVFPPDERIRGEHIAGYREESSDLPEQFEATKEKIFAEFS.

This sequence belongs to the universal ribosomal protein uL18 family. Part of the 50S ribosomal subunit. Contacts the 5S and 23S rRNAs.

Its function is as follows. This is one of the proteins that bind and probably mediate the attachment of the 5S RNA into the large ribosomal subunit, where it forms part of the central protuberance. The sequence is that of Large ribosomal subunit protein uL18 from Methanosarcina acetivorans (strain ATCC 35395 / DSM 2834 / JCM 12185 / C2A).